We begin with the raw amino-acid sequence, 331 residues long: MNAPHMNDTTADAATLDATAAPAGRPALTRREQKDAYENNKLFKRIVRQVGQAIGDFNMIEQGDKVMVCLSGGKDSYAMLDVLLRLRERAPIDFDIVAVNLDQKQPGFPEHVLPEYLKQVGVPFHIENQDTYSIVKRLVPEGKTTCSLCSRLRRGILYRVAGELGATKIALGHHRDDIVQTLLLNMFYGGKLKGMPPKLQSDDGKNIVIRPLAYVKETDLEKYAELREFPIIPCNLCGSQPNLKRAEMKALIREWDKRFPGRVENMFNALAKVVPSHLMDTTLYPFQSLRASGVADPQGDIAFDEEPCASGDDTAAPGGAQPISIVQFDDL.

The segment at Met1–Arg31 is disordered. A compositionally biased stretch (low complexity) spans Asp8 to Ala23. The short motif at Ser71–Ser76 is the PP-loop motif element. Cys146, Cys149, and Cys237 together coordinate [4Fe-4S] cluster.

The protein belongs to the TtcA family. As to quaternary structure, homodimer. Requires Mg(2+) as cofactor. The cofactor is [4Fe-4S] cluster.

The protein resides in the cytoplasm. The catalysed reaction is cytidine(32) in tRNA + S-sulfanyl-L-cysteinyl-[cysteine desulfurase] + AH2 + ATP = 2-thiocytidine(32) in tRNA + L-cysteinyl-[cysteine desulfurase] + A + AMP + diphosphate + H(+). Its pathway is tRNA modification. Functionally, catalyzes the ATP-dependent 2-thiolation of cytidine in position 32 of tRNA, to form 2-thiocytidine (s(2)C32). The sulfur atoms are provided by the cysteine/cysteine desulfurase (IscS) system. The protein is tRNA-cytidine(32) 2-sulfurtransferase of Burkholderia lata (strain ATCC 17760 / DSM 23089 / LMG 22485 / NCIMB 9086 / R18194 / 383).